Reading from the N-terminus, the 329-residue chain is Small ribosomal subunit protein uS2 (329 aa).

This sequence belongs to the universal ribosomal protein uS2 family.

This chain is Small ribosomal subunit protein uS2, found in Bradyrhizobium sp. (strain ORS 278).